The sequence spans 506 residues: Maturase K (506 aa).

The protein belongs to the intron maturase 2 family. MatK subfamily.

It localises to the plastid. The protein localises to the chloroplast. Its function is as follows. Usually encoded in the trnK tRNA gene intron. Probably assists in splicing its own and other chloroplast group II introns. This Gaultheria procumbens (Wintergreen) protein is Maturase K.